The sequence spans 86 residues: CRISPR-associated endoribonuclease Cas2 (86 aa).

Asp-8 is a binding site for Mg(2+).

This sequence belongs to the CRISPR-associated endoribonuclease Cas2 protein family. In terms of assembly, homodimer, forms a heterotetramer with a Cas1 homodimer. It depends on Mg(2+) as a cofactor.

Its function is as follows. CRISPR (clustered regularly interspaced short palindromic repeat), is an adaptive immune system that provides protection against mobile genetic elements (viruses, transposable elements and conjugative plasmids). CRISPR clusters contain sequences complementary to antecedent mobile elements and target invading nucleic acids. CRISPR clusters are transcribed and processed into CRISPR RNA (crRNA). Functions as a ssRNA-specific endoribonuclease. Involved in the integration of spacer DNA into the CRISPR cassette. Plasmid targeted by CRISPR locus P1 transform wild-type cells very poorly. The protein is CRISPR-associated endoribonuclease Cas2 of Haloferax volcanii (strain ATCC 29605 / DSM 3757 / JCM 8879 / NBRC 14742 / NCIMB 2012 / VKM B-1768 / DS2) (Halobacterium volcanii).